Reading from the N-terminus, the 198-residue chain is Sortase D (198 aa).

Residues 7 to 25 (LFIIAAGLVIAGYGGFKLI) form a helical membrane-spanning segment. Over residues 36–46 (KEAKLAAKKPQ) the composition is skewed to basic and acidic residues. Residues 36–67 (KEAKLAAKKPQEASGTKNSTDQAKNKASFKPE) form a disordered region. A compositionally biased stretch (polar residues) spans 48–57 (ASGTKNSTDQ). The active-site Proton donor/acceptor is the histidine 119. Catalysis depends on cysteine 177, which acts as the Acyl-thioester intermediate.

Belongs to the bacterial sortase family. Class D subfamily.

It is found in the cell membrane. In terms of biological role, transpeptidase that anchors surface proteins to the cell wall. Recognizes and modifies its substrate by proteolytic cleavage of a C-terminal sorting signal. Following cleavage, a covalent intermediate is formed via a thioester bond between the sortase and its substrate, which is then transferred and covalently attached to the cell wall. This sortase recognizes a Leu-Pro-Asp-Thr-Ser/Ala (LPDTS/A) motif. It has two substrates, YhcR and YfkN. This Bacillus subtilis (strain 168) protein is Sortase D.